Here is a 419-residue protein sequence, read N- to C-terminus: C2 calcium-dependent domain-containing protein 4C (419 aa).

Disordered stretches follow at residues 1–96, 115–136, 151–225, and 247–300; these read MRKT…LASE, EDWTAEEATNADPQAQGAMSLP, AESP…SPFG, and VSQL…HTVK. Low complexity predominate over residues 75–94; the sequence is LASPGPRRAPRSPRLPAKLA. Gly residues predominate over residues 186 to 196; it reads KGNGGDGGSRE. A compositionally biased stretch (polar residues) spans 212–225; it reads ESDTGSSAESSPFG. Residues Ser259, Ser261, and Ser270 each carry the phosphoserine modification. Residues 303-419 enclose the C2 domain; the sequence is TRGSVRLLAE…LPLTSLLPFL (117 aa).

Belongs to the C2CD4 family.

The chain is C2 calcium-dependent domain-containing protein 4C (C2cd4c) from Mus musculus (Mouse).